Reading from the N-terminus, the 520-residue chain is Sterile alpha motif domain-containing protein 3 (520 aa).

Residues 4–71 (WSVEQVCSWL…KYKQNTQGLK (68 aa)) enclose the SAM domain. The tract at residues 85–114 (TEAARDYRDEESSSPARHGEQMPSFYPAEN) is disordered.

In Homo sapiens (Human), this protein is Sterile alpha motif domain-containing protein 3 (SAMD3).